We begin with the raw amino-acid sequence, 202 residues long: Dephospho-CoA kinase (202 aa).

The region spanning 4–201 is the DPCK domain; it reads VVALTGGIAS…QKYLAMSRQN (198 aa). Residue 12 to 17 participates in ATP binding; that stretch reads ASGKTT.

The protein belongs to the CoaE family.

It is found in the cytoplasm. It carries out the reaction 3'-dephospho-CoA + ATP = ADP + CoA + H(+). Its pathway is cofactor biosynthesis; coenzyme A biosynthesis; CoA from (R)-pantothenate: step 5/5. Its function is as follows. Catalyzes the phosphorylation of the 3'-hydroxyl group of dephosphocoenzyme A to form coenzyme A. This Vibrio cholerae serotype O1 (strain ATCC 39315 / El Tor Inaba N16961) protein is Dephospho-CoA kinase.